The chain runs to 95 residues: Integration host factor subunit beta (95 aa).

The segment at 56-76 is disordered; it reads RAPRTGRNPKTGSSVDLEGKY.

It belongs to the bacterial histone-like protein family. Heterodimer of an alpha and a beta chain.

This protein is one of the two subunits of integration host factor, a specific DNA-binding protein that functions in genetic recombination as well as in transcriptional and translational control. The chain is Integration host factor subunit beta from Shewanella baltica (strain OS223).